The chain runs to 166 residues: Small ribosomal subunit protein uS5 (166 aa).

One can recognise an S5 DRBM domain in the interval 11–74 (LQEKLIAVNR…EKARRNMMNV (64 aa)).

It belongs to the universal ribosomal protein uS5 family. As to quaternary structure, part of the 30S ribosomal subunit. Contacts proteins S4 and S8.

Functionally, with S4 and S12 plays an important role in translational accuracy. In terms of biological role, located at the back of the 30S subunit body where it stabilizes the conformation of the head with respect to the body. This is Small ribosomal subunit protein uS5 from Pectobacterium atrosepticum (strain SCRI 1043 / ATCC BAA-672) (Erwinia carotovora subsp. atroseptica).